The primary structure comprises 196 residues: HTH-type transcriptional regulator EcpR (196 aa).

The HTH luxR-type domain occupies lysine 138–glutamine 196. The segment at residues proline 162–arginine 181 is a DNA-binding region (H-T-H motif).

This sequence belongs to the EcpR/MatA family.

Its subcellular location is the cytoplasm. Functionally, part of the ecpRABCDE operon, which encodes the E.coli common pilus (ECP). ECP is found in both commensal and pathogenic strains and plays a dual role in early-stage biofilm development and host cell recognition. Positively regulates the expression of the ecp operon. The polypeptide is HTH-type transcriptional regulator EcpR (ecpR) (Escherichia coli (strain K12 / DH10B)).